The primary structure comprises 236 residues: DNA repair protein RecO (236 aa).

Belongs to the RecO family.

Its function is as follows. Involved in DNA repair and RecF pathway recombination. The sequence is that of DNA repair protein RecO from Cellvibrio japonicus (strain Ueda107) (Pseudomonas fluorescens subsp. cellulosa).